The following is a 504-amino-acid chain: Galactokinase (504 aa).

4 residues coordinate alpha-D-galactose: Arg47, Asp53, His54, and Asp56. Gly150, Gly152, Ser154, and Ser155 together coordinate ATP. Asn196 and Asp200 together coordinate alpha-D-galactose. Asp200 serves as the catalytic Proton acceptor. Residues Ser244, Asn245, and Lys246 each contribute to the ATP site. Tyr254 contributes to the alpha-D-galactose binding site.

The protein belongs to the GHMP kinase family. GalK subfamily.

The catalysed reaction is alpha-D-galactose + ATP = alpha-D-galactose 1-phosphate + ADP + H(+). Its pathway is carbohydrate metabolism; galactose metabolism. Galactokinase is a key enzyme in the galactose metabolism where it catalyzes the conversion of alpha-D-galactose to galactose 1-phosphate. Can also induce the transcription of the gal genes in response to the organism being challenged with galactose as the sole source of carbon. This is Galactokinase from Candida parapsilosis (Yeast).